A 488-amino-acid chain; its full sequence is Ribulose bisphosphate carboxylase large chain (488 aa).

The substrate site is built by Asn127 and Thr177. Lys179 serves as the catalytic Proton acceptor. A substrate-binding site is contributed by Lys181. The Mg(2+) site is built by Lys205, Asp207, and Glu208. At Lys205 the chain carries N6-carboxylysine. The Proton acceptor role is filled by His297. Positions 298, 330, and 382 each coordinate substrate.

This sequence belongs to the RuBisCO large chain family. Type I subfamily. Heterohexadecamer of 8 large chains and 8 small chains. Mg(2+) serves as cofactor.

The protein localises to the plastid. It localises to the chloroplast. The catalysed reaction is 2 (2R)-3-phosphoglycerate + 2 H(+) = D-ribulose 1,5-bisphosphate + CO2 + H2O. The enzyme catalyses D-ribulose 1,5-bisphosphate + O2 = 2-phosphoglycolate + (2R)-3-phosphoglycerate + 2 H(+). Functionally, ruBisCO catalyzes two reactions: the carboxylation of D-ribulose 1,5-bisphosphate, the primary event in carbon dioxide fixation, as well as the oxidative fragmentation of the pentose substrate in the photorespiration process. Both reactions occur simultaneously and in competition at the same active site. This is Ribulose bisphosphate carboxylase large chain from Porphyridium aerugineum (Red microalga).